The chain runs to 707 residues: Probable potassium transporter 17 (707 aa).

Residues 1–25 (MDLEAGSIRPRSDGEGGGPAAGRET) are disordered. Residues 1 to 34 (MDLEAGSIRPRSDGEGGGPAAGRETDDSNVWKDL) lie on the Cytoplasmic side of the membrane. Residues 35-55 (FLAYKTLGVVFGGLVTSPLYV) form a helical membrane-spanning segment. Residues 56 to 71 (YPSMNLSSPTEADYLG) are Extracellular-facing. An N-linked (GlcNAc...) asparagine glycan is attached at N60. The helical transmembrane segment at 72 to 92 (IYSIMFWTLTLIGVVKYVCIA) threads the bilayer. Topologically, residues 93–157 (LNADDHGEGG…FFEQSITARR (65 aa)) are cytoplasmic. A helical membrane pass occupies residues 158–178 (VLLFVAVLGMCMLIGDGILTP). Residues 179–194 (AISVLSAIDGIRGPFP) are Extracellular-facing. Residues 195–215 (TVSKPVVEALSAAILIGLFLL) traverse the membrane as a helical segment. Residues 216 to 222 (QKYGTSK) lie on the Cytoplasmic side of the membrane. A helical membrane pass occupies residues 223–243 (VSFLFSPIMAAWTFTTPIIGL). Residues 244–276 (YSIVHYYPGIFKAISPYYIVHFFLRNKRQGWQL) are Extracellular-facing. Residues 277-297 (LGGTVLCITGAEAMFADLGHF) form a helical membrane-spanning segment. Residues 298-305 (SKKAIQIA) lie on the Cytoplasmic side of the membrane. A helical membrane pass occupies residues 306 to 326 (FLSSIYPSLVLTYAGQTAYLI). Over 327–343 (NNVNDFGDGFYKFVPRP) the chain is Extracellular. The chain crosses the membrane as a helical span at residues 344–364 (VYWPMFVVATLAAIVASQSLI). At 365–402 (SATFSVIKQSVVLDYFPRVKVVHTSQHKEGEVYSPEIN) the chain is on the cytoplasmic side. A helical membrane pass occupies residues 403–423 (YILMVLCVGVILGFGGGKAIG). Topologically, residues 424–427 (NAFG) are extracellular. A helical membrane pass occupies residues 428 to 448 (VVVIMVMLITTVLLTLVMIII). Over 449–454 (WRTPLV) the chain is Cytoplasmic. Residues 455–475 (LAGLYFVPFFIMEGAYVSAVF) traverse the membrane as a helical segment. Residues 476–480 (TKIPE) lie on the Extracellular side of the membrane. Residues 481-501 (GGWLPFAVSITLAMIMFGWYY) form a helical membrane-spanning segment. At 502–707 (GRQRKFEYEM…RVEIGMLYKV (206 aa)) the chain is on the cytoplasmic side.

This sequence belongs to the HAK/KUP transporter (TC 2.A.72.3) family.

It is found in the membrane. Its function is as follows. High-affinity potassium transporter. This Oryza sativa subsp. japonica (Rice) protein is Probable potassium transporter 17 (HAK17).